Reading from the N-terminus, the 829-residue chain is Leucine--tRNA ligase (829 aa).

The 'HIGH' region signature appears at 34–44 (PYPSGNIHMGH). The 'KMSKS' region signature appears at 591–595 (KMSKS). Lys-594 serves as a coordination point for ATP.

The protein belongs to the class-I aminoacyl-tRNA synthetase family.

It localises to the cytoplasm. It catalyses the reaction tRNA(Leu) + L-leucine + ATP = L-leucyl-tRNA(Leu) + AMP + diphosphate. This is Leucine--tRNA ligase from Ehrlichia chaffeensis (strain ATCC CRL-10679 / Arkansas).